We begin with the raw amino-acid sequence, 187 residues long: Elongation factor P (187 aa).

Belongs to the elongation factor P family.

It localises to the cytoplasm. Its pathway is protein biosynthesis; polypeptide chain elongation. Its function is as follows. Involved in peptide bond synthesis. Stimulates efficient translation and peptide-bond synthesis on native or reconstituted 70S ribosomes in vitro. Probably functions indirectly by altering the affinity of the ribosome for aminoacyl-tRNA, thus increasing their reactivity as acceptors for peptidyl transferase. This chain is Elongation factor P, found in Desulforapulum autotrophicum (strain ATCC 43914 / DSM 3382 / VKM B-1955 / HRM2) (Desulfobacterium autotrophicum).